A 342-amino-acid polypeptide reads, in one-letter code: Galactose mutarotase (342 aa).

An N-acetylalanine modification is found at A2. The residue at position 14 (S14) is a Phosphoserine. Beta-D-galactose contacts are provided by residues 81 to 82 (NR) and H107. At S124 the chain carries Phosphoserine. H176 acts as the Proton donor in catalysis. Beta-D-galactose contacts are provided by residues 176–178 (HSY), D243, Q279, and E307. E307 acts as the Proton acceptor in catalysis.

It belongs to the aldose epimerase family. As to quaternary structure, monomer.

Its subcellular location is the cytoplasm. It catalyses the reaction alpha-D-galactose = beta-D-galactose. The catalysed reaction is alpha-D-glucose = beta-D-glucose. The protein operates within carbohydrate metabolism; hexose metabolism. It participates in carbohydrate metabolism; galactose metabolism. In terms of biological role, mutarotase that catalyzes the interconversion of beta-D-galactose and alpha-D-galactose during galactose metabolism. Beta-D-galactose is metabolized in the liver into glucose 1-phosphate, the primary metabolic fuel, by the action of four enzymes that constitute the Leloir pathway: GALM, GALK1 (galactokinase), GALT (galactose-1-phosphate uridylyltransferase) and GALE (UDP-galactose-4'-epimerase). Involved in the maintenance of the equilibrium between the beta- and alpha-anomers of galactose, therefore ensuring a sufficient supply of the alpha-anomer for GALK1. Also active on D-glucose although shows a preference for galactose over glucose. This chain is Galactose mutarotase, found in Homo sapiens (Human).